Reading from the N-terminus, the 262-residue chain is Transmembrane and immunoglobulin domain-containing protein 1 (262 aa).

The signal sequence occupies residues 1 to 29 (MAWKSSVIMQMGRFLLLVILFLPREMTSS). In terms of domain architecture, Ig-like C2-type 1 spans 30-114 (VLTVNGKTEN…LGRDQSVSVS (85 aa)). The Extracellular segment spans residues 30–220 (VLTVNGKTEN…IVKDKTVGVP (191 aa)). Cys-54 and Cys-103 form a disulfide bridge. Residues Asn-58, Asn-83, Asn-118, Asn-158, and Asn-190 are each glycosylated (N-linked (GlcNAc...) asparagine). Residues 122–207 (PPLLSGNDFQ…KSSLKTESLD (86 aa)) form the Ig-like C2-type 2 domain. Cys-143 and Cys-195 are oxidised to a cystine. Residues 221–241 (IEPIIAACVVIFLTLCFGLIA) form a helical membrane-spanning segment. Residues 242–262 (RRKKIMKLCMKDKDPHSETAL) lie on the Cytoplasmic side of the membrane.

As to quaternary structure, homodimer. Post-translationally, N-glycosylated.

The protein localises to the cell membrane. The protein resides in the cytoplasm. Its function is as follows. May control cell-cell adhesion, cell migration and proliferation, cell morphology, and protects renal epithelial cells from oxidative cell injury to promote cell survival. In Homo sapiens (Human), this protein is Transmembrane and immunoglobulin domain-containing protein 1.